Here is a 207-residue protein sequence, read N- to C-terminus: Redox-sensing transcriptional repressor Rex (207 aa).

A DNA-binding region (H-T-H motif) is located at residues 17-56; sequence IYLRYLSYLQQVEVTTVSSQQMGKNLDVNPAQIRKDLAAF. 91–96 contacts NAD(+); the sequence is GAGHLG.

Belongs to the transcriptional regulatory Rex family. In terms of assembly, homodimer.

It is found in the cytoplasm. In terms of biological role, modulates transcription in response to changes in cellular NADH/NAD(+) redox state. The sequence is that of Redox-sensing transcriptional repressor Rex from Brevibacillus brevis (strain 47 / JCM 6285 / NBRC 100599).